The sequence spans 138 residues: Putative nickel-responsive regulator (138 aa).

Ni(2+)-binding residues include H78, H89, H91, and C97.

Belongs to the transcriptional regulatory CopG/NikR family. It depends on Ni(2+) as a cofactor.

Its function is as follows. Transcriptional regulator. The polypeptide is Putative nickel-responsive regulator (Thermococcus kodakarensis (strain ATCC BAA-918 / JCM 12380 / KOD1) (Pyrococcus kodakaraensis (strain KOD1))).